Reading from the N-terminus, the 319-residue chain is D-alanine--D-alanine ligase (319 aa).

One can recognise an ATP-grasp domain in the interval 109–313; the sequence is KRVWLAEGLP…YEQLCLHILQ (205 aa). 139-194 contacts ATP; the sequence is PDDLGLPLIVKPPREGSSIGVTKVLGYSQMQDAVALSARHDPDVLCEEFIDGAEVT. Asp-266, Glu-280, and Asn-282 together coordinate Mg(2+).

It belongs to the D-alanine--D-alanine ligase family. Requires Mg(2+) as cofactor. Mn(2+) serves as cofactor.

It is found in the cytoplasm. The enzyme catalyses 2 D-alanine + ATP = D-alanyl-D-alanine + ADP + phosphate + H(+). It participates in cell wall biogenesis; peptidoglycan biosynthesis. In terms of biological role, cell wall formation. The polypeptide is D-alanine--D-alanine ligase (Methylibium petroleiphilum (strain ATCC BAA-1232 / LMG 22953 / PM1)).